A 156-amino-acid polypeptide reads, in one-letter code: ATP synthase subunit b (156 aa).

A helical membrane pass occupies residues 7–29; sequence LIGQLIAFALFTWFCVKFVWPPI.

It belongs to the ATPase B chain family. In terms of assembly, F-type ATPases have 2 components, F(1) - the catalytic core - and F(0) - the membrane proton channel. F(1) has five subunits: alpha(3), beta(3), gamma(1), delta(1), epsilon(1). F(0) has three main subunits: a(1), b(2) and c(10-14). The alpha and beta chains form an alternating ring which encloses part of the gamma chain. F(1) is attached to F(0) by a central stalk formed by the gamma and epsilon chains, while a peripheral stalk is formed by the delta and b chains.

Its subcellular location is the cell inner membrane. Functionally, f(1)F(0) ATP synthase produces ATP from ADP in the presence of a proton or sodium gradient. F-type ATPases consist of two structural domains, F(1) containing the extramembraneous catalytic core and F(0) containing the membrane proton channel, linked together by a central stalk and a peripheral stalk. During catalysis, ATP synthesis in the catalytic domain of F(1) is coupled via a rotary mechanism of the central stalk subunits to proton translocation. In terms of biological role, component of the F(0) channel, it forms part of the peripheral stalk, linking F(1) to F(0). The chain is ATP synthase subunit b from Actinobacillus succinogenes (strain ATCC 55618 / DSM 22257 / CCUG 43843 / 130Z).